Reading from the N-terminus, the 156-residue chain is RNA polymerase sigma factor SigS (156 aa).

Positions 29–44 (EYYQLLLIKMWQLSQI) match the Polymerase core binding motif. Residues 126-145 (QYEIADIMSLSTSTIKLIKA) constitute a DNA-binding region (H-T-H motif).

The protein belongs to the sigma-70 factor family.

In terms of biological role, sigma factors are initiation factors that promote the attachment of RNA polymerase to specific initiation sites and are then released. Sigma-S contributes to the protection against external stress, thus playing a role in cellular fitness and survival. This Staphylococcus aureus (strain MRSA252) protein is RNA polymerase sigma factor SigS (sigS).